The following is a 205-amino-acid chain: Protein TGAM_1450 (205 aa).

The AMMECR1 domain maps to 7–201; it reads EWGEFLVRLA…EEYPRGPVRR (195 aa).

This chain is Protein TGAM_1450, found in Thermococcus gammatolerans (strain DSM 15229 / JCM 11827 / EJ3).